The sequence spans 396 residues: 1-deoxy-D-xylulose 5-phosphate reductoisomerase (396 aa).

T10, G11, S12, I13, and N123 together coordinate NADPH. 1-deoxy-D-xylulose 5-phosphate is bound at residue K124. NADPH is bound at residue E125. D149 is a binding site for Mn(2+). 1-deoxy-D-xylulose 5-phosphate is bound by residues S150, E151, S185, and H208. A Mn(2+)-binding site is contributed by E151. G214 provides a ligand contact to NADPH. 4 residues coordinate 1-deoxy-D-xylulose 5-phosphate: S221, N226, K227, and E230. E230 is a Mn(2+) binding site.

Belongs to the DXR family. Mg(2+) serves as cofactor. Requires Mn(2+) as cofactor.

The enzyme catalyses 2-C-methyl-D-erythritol 4-phosphate + NADP(+) = 1-deoxy-D-xylulose 5-phosphate + NADPH + H(+). The protein operates within isoprenoid biosynthesis; isopentenyl diphosphate biosynthesis via DXP pathway; isopentenyl diphosphate from 1-deoxy-D-xylulose 5-phosphate: step 1/6. Its function is as follows. Catalyzes the NADPH-dependent rearrangement and reduction of 1-deoxy-D-xylulose-5-phosphate (DXP) to 2-C-methyl-D-erythritol 4-phosphate (MEP). This chain is 1-deoxy-D-xylulose 5-phosphate reductoisomerase, found in Shewanella sp. (strain MR-7).